Here is a 137-residue protein sequence, read N- to C-terminus: Actin-depolymerizing factor 12 (137 aa).

Position 6 is a phosphoserine (serine 6). The ADF-H domain maps to 7-137 (GMAVEDECKL…SLDIIKSRAL (131 aa)).

It belongs to the actin-binding proteins ADF family. As to expression, specifically expressed in pollen.

Its subcellular location is the cytoplasm. It is found in the cytoskeleton. Actin-depolymerizing protein. Severs actin filaments (F-actin) and binds to actin monomers. This chain is Actin-depolymerizing factor 12, found in Arabidopsis thaliana (Mouse-ear cress).